A 577-amino-acid polypeptide reads, in one-letter code: Arginine--tRNA ligase (577 aa).

Residues 122 to 132 carry the 'HIGH' region motif; sequence PNVAKEMHVGH.

This sequence belongs to the class-I aminoacyl-tRNA synthetase family. In terms of assembly, monomer.

It localises to the cytoplasm. The catalysed reaction is tRNA(Arg) + L-arginine + ATP = L-arginyl-tRNA(Arg) + AMP + diphosphate. The sequence is that of Arginine--tRNA ligase from Escherichia coli O81 (strain ED1a).